Consider the following 336-residue polypeptide: UDP-3-O-acylglucosamine N-acyltransferase (336 aa).

Histidine 233 acts as the Proton acceptor in catalysis.

The protein belongs to the transferase hexapeptide repeat family. LpxD subfamily. Homotrimer.

The catalysed reaction is a UDP-3-O-[(3R)-3-hydroxyacyl]-alpha-D-glucosamine + a (3R)-hydroxyacyl-[ACP] = a UDP-2-N,3-O-bis[(3R)-3-hydroxyacyl]-alpha-D-glucosamine + holo-[ACP] + H(+). It functions in the pathway bacterial outer membrane biogenesis; LPS lipid A biosynthesis. Functionally, catalyzes the N-acylation of UDP-3-O-acylglucosamine using 3-hydroxyacyl-ACP as the acyl donor. Is involved in the biosynthesis of lipid A, a phosphorylated glycolipid that anchors the lipopolysaccharide to the outer membrane of the cell. This chain is UDP-3-O-acylglucosamine N-acyltransferase, found in Helicobacter pylori (strain J99 / ATCC 700824) (Campylobacter pylori J99).